Reading from the N-terminus, the 1832-residue chain is Zinc finger SWIM domain-containing protein 8 (1832 aa).

Residues serine 36, serine 48, and serine 53 each carry the phosphoserine modification. A disordered region spans residues 45 to 67 (RKQSAGPNSPTGGGGGGGSGGTR). A compositionally biased stretch (gly residues) spans 55–65 (TGGGGGGGSGG). Residues 172–208 (YNVAVMFDRCRVTSCSCTCGAGAKWCTHVVALCLFRI) form an SWIM-type zinc finger. A phosphoserine mark is found at serine 437 and serine 564. 3 disordered regions span residues 516-722 (PGAS…VGEE), 800-821 (NPPD…VSTS), and 1018-1216 (SQTH…TVDV). Basic and acidic residues predominate over residues 563–572 (LSAEGGDKAL). Positions 1021 to 1042 (HKPQTLSSFYSSSRPATANQRS) are enriched in polar residues. A compositionally biased stretch (gly residues) spans 1121–1132 (SRGGYNGRGWGS). Phosphothreonine is present on threonine 1141. Over residues 1146–1161 (IDSSAPETTSDSSPTL) the composition is skewed to polar residues. Phosphoserine occurs at positions 1155, 1158, and 1162. Residues 1176–1211 (GRGQDSDSISSSSSDSLGSSSSSGSRRASASGGARA) are compositionally biased toward low complexity. Phosphoserine is present on serine 1270. Over residues 1435 to 1446 (STAREGATSCSG) the composition is skewed to polar residues. Residues 1435-1465 (STAREGATSCSGSGMRAAGEAGRGLPEGRGA) are disordered. Gly residues predominate over residues 1455 to 1465 (AGRGLPEGRGA). At serine 1831 the chain carries Phosphoserine.

The protein belongs to the ZSWIM8 family. In terms of assembly, component of the SCF-like E3 ubiquitin-protein ligase complex which contains CUL3, RBX1, ELOB, ELOC and ZSWIM8. Interacts with DAB1.

The protein localises to the cytoplasm. Its subcellular location is the cytosol. Its pathway is protein modification; protein ubiquitination. Its function is as follows. Substrate recognition component of a SCF-like E3 ubiquitin-protein ligase complex that promotes target-directed microRNA degradation (TDMD), a process that mediates degradation of microRNAs (miRNAs). The SCF-like E3 ubiquitin-protein ligase complex acts by catalyzing ubiquitination and subsequent degradation of AGO proteins (AGO1, AGO2, AGO3 and/or AGO4), thereby exposing miRNAs for degradation. Specifically recognizes and binds AGO proteins when they are engaged with a TDMD target. May also acts as a regulator of axon guidance: specifically recognizes misfolded ROBO3 and promotes its ubiquitination and subsequent degradation. Plays an essential role for proper embryonic development of heart and lung. Controls protein quality of DAB1, a key signal molecule for brain development, thus protecting its signaling strength. Mechanistically, recognizes intrinsically disordered regions of DAB1 and eliminates misfolded DAB1 that cannot be properly phosphorylated. The polypeptide is Zinc finger SWIM domain-containing protein 8 (Mus musculus (Mouse)).